The sequence spans 313 residues: GTP cyclohydrolase 1 (313 aa).

Residues 1–10 are compositionally biased toward basic and acidic residues; sequence MAQETTRDGS. The tract at residues 1–120 is disordered; it reads MAQETTRDGS…SRGTRERLEE (120 aa). A compositionally biased stretch (low complexity) spans 11–20; sequence DSPSGSVSPP. Residues 29 to 39 are compositionally biased toward basic residues; it reads KDKKSSKKRAH. A compositionally biased stretch (basic and acidic residues) spans 40–64; that stretch reads SSGERRSSVSKPARDPSDKPEESPS. A compositionally biased stretch (low complexity) spans 72-102; it reads TSSTAAAAVPSTITEEVSPSTSVTRSPSPVI. Zn(2+) is bound by residues C202, H205, and C273.

Belongs to the GTP cyclohydrolase I family. Toroid-shaped homodecamer, composed of two pentamers of five dimers.

The catalysed reaction is GTP + H2O = 7,8-dihydroneopterin 3'-triphosphate + formate + H(+). It functions in the pathway cofactor biosynthesis; 7,8-dihydroneopterin triphosphate biosynthesis; 7,8-dihydroneopterin triphosphate from GTP: step 1/1. GTP shows a positive allosteric effect, and tetrahydrobiopterin inhibits the enzyme activity. In terms of biological role, GTP cyclohydrolase 1 is the first enzyme in the biosynthetic pathway leading to folic acid. The polypeptide is GTP cyclohydrolase 1 (gch-1) (Neurospora crassa (strain ATCC 24698 / 74-OR23-1A / CBS 708.71 / DSM 1257 / FGSC 987)).